We begin with the raw amino-acid sequence, 336 residues long: Potassium channel subfamily K member 1 (336 aa).

Residues 1-20 (MLQSLAGSSCVRLVERHRSA) are Cytoplasmic-facing. The helical transmembrane segment at 21–41 (WCFGFLVLGYLLYLVFGAVVF) threads the bilayer. Over 42–103 (SSVELPYEDL…SNASGNWNWD (62 aa)) the chain is Extracellular. N-linked (GlcNAc...) asparagine glycosylation is present at Asn-95. The helical intramembrane region spans 104 to 116 (FTSALFFASTVLS). Residues 117–122 (TTGYGH) lie within the membrane without spanning it. A selectivity filter 1 region spans residues 117–122 (TTGYGH). The Extracellular portion of the chain corresponds to 123 to 132 (TVPLSDGGKA). Residues 133–156 (FCIIYSVIGIPFTLLFLTAVVQRV) traverse the membrane as a helical segment. Residues 157 to 181 (TVHVTRRPVLYFHIRWGFSKQVVAI) are Cytoplasmic-facing. The chain crosses the membrane as a helical span at residues 182-202 (VHAVLLGFVTVSCFFFIPAAV). Residues 203 to 211 (FSVLEDDWN) are Extracellular-facing. Positions 212–224 (FLESFYFCFISLS) form an intramembrane region, helical. Residues 225-230 (TIGLGD) are selectivity filter 2. The stretch at 225-231 (TIGLGDY) is an intramembrane region. The Extracellular portion of the chain corresponds to 232-243 (VPGEGYNQKFRE). A helical membrane pass occupies residues 244-267 (LYKIGITCYLLLGLIAMLVVLETF). The Cytoplasmic segment spans residues 268-336 (CELHELKKFR…PPYEDGSANH (69 aa)). Lys-274 is covalently cross-linked (Glycyl lysine isopeptide (Lys-Gly) (interchain with G-Cter in SUMO)). The interval 293 to 299 (IMEHDQL) is important for intracellular retention in recycling endosomes. The disordered stretch occupies residues 310–336 (GLKEEQKQNEPFVASQSPPYEDGSANH). Ser-326 is modified (phosphoserine).

This sequence belongs to the two pore domain potassium channel (TC 1.A.1.8) family. As to quaternary structure, homodimer; disulfide-linked. Heterodimer with KCNK2; disulfide-linked. In astrocytes, forms mostly heterodimeric potassium channels with KCNK2, with only a minor proportion of functional channels containing homodimeric KCNK1. Interacts with KCNK3 and KCNK9, forming functional heterodimeric channels. Interacts with GNG4. Identified in a complex with PSD and ARF6; interacts only with PSD that is bound to ARF6. Interacts with UBE2I. Sumoylation is controversial. Sumoylated by UBE2I. Not sumoylated when expressed in xenopus oocytes or mammalian cells. Sumoylation inactivates the channel, but does not interfere with expression at the cell membrane. Sumoylation of a single subunit is sufficient to silence the dimeric channel. Sumoylation of KCNK1 is sufficient to silence heterodimeric channels formed by KCNK1 and KCNK3 or KCNK9. Desumoylated by SENP1; this activates the channel. Desumoylated by SENP1; this strongly increases halothane-mediated activation of heterodimeric channels formed with KCNK9. SENP1 treatment has no effect. Detected in brain and in kidney cortex and medulla, especially at the renal brush border membranes of the proximal convoluted tubules, in distal tubules and on intercalated cells of the collecting duct. Detected in cerebellum granule neurons. Detected in astrocytes in hippocampus stratum radiatum. Highly expressed in the stria vascularis in the cochlea. Detected in neurons in Scarpa's ganglion in the inner ear, at nerve terminals in the crista ampullaris, in supporting cells and dark cells, but not in hair cells (at protein level). Detected in the brain cerebellar granule cell layer, amygdala, thalamus reticular nucleus, habenula, mesencephalic trigeminal neurons, neocortex and piriform cortex, and at lower levels in the olfactory bulb. Detected in Scarpa's ganglia and crista ampullaris in the inner ear.

The protein localises to the cell membrane. It is found in the recycling endosome. Its subcellular location is the apical cell membrane. The protein resides in the cytoplasmic vesicle. It localises to the perikaryon. The protein localises to the cell projection. It is found in the dendrite. Its subcellular location is the synaptic cell membrane. The catalysed reaction is K(+)(in) = K(+)(out). The enzyme catalyses NH4(+)(in) = NH4(+)(out). It carries out the reaction Na(+)(in) = Na(+)(out). It catalyses the reaction Rb(+)(in) = Rb(+)(out). The catalysed reaction is Cs(+)(in) = Cs(+)(out). The enzyme catalyses Li(+)(in) = Li(+)(out). It carries out the reaction L-glutamate(out) = L-glutamate(in). It catalyses the reaction chloride(in) = chloride(out). Its activity is regulated as follows. Inhibited by 100 uM quinine. Slightly inhibited by Ba(+). Activity is first increased and then decreased when the extracellular pH is lowered to 6.0. In terms of biological role, ion channel that contributes to passive transmembrane potassium transport and to the regulation of the resting membrane potential in brain astrocytes, but also in kidney and in other tissues. Forms dimeric channels through which potassium ions pass in accordance with their electrochemical gradient. The channel is selective for K(+) ions at physiological potassium concentrations and at neutral pH, but becomes permeable to Na(+) at subphysiological K(+) levels and upon acidification of the extracellular medium. The homodimer has very low potassium channel activity, when expressed in heterologous systems, and can function as weakly inward rectifying potassium channel. Channel activity is modulated by activation of serotonin receptors. Heterodimeric channels containing KCNK1 and KCNK2 have much higher activity, and may represent the predominant form in astrocytes. Heterodimeric channels containing KCNK1 and KCNK3 or KCNK9 have much higher activity. Heterodimeric channels formed by KCNK1 and KCNK9 may contribute to halothane-sensitive currents. Mediates outward rectifying potassium currents in dentate gyrus granule cells and contributes to the regulation of their resting membrane potential. Contributes to the regulation of action potential firing in dentate gyrus granule cells and down-regulates their intrinsic excitability. Contributes to the regulation of the resting membrane potential of pancreatic beta cells. In astrocytes, the heterodimer formed by KCNK1 and KCNK2 is required for rapid glutamate release in response to activation of G-protein coupled receptors, such as F2R and CNR1. Required for normal ion and water transport in the kidney. The low channel activity of homodimeric KCNK1 may be due to sumoylation. The low channel activity may be due to rapid internalization from the cell membrane and retention in recycling endosomes. Permeable to monovalent cations with ion selectivity for K(+) &gt; Rb(+) &gt;&gt; NH4(+) &gt;&gt; Cs(+) = Na(+) = Li(+). In Rattus norvegicus (Rat), this protein is Potassium channel subfamily K member 1.